The following is a 1034-amino-acid chain: Tubulin glycylase 3D (1034 aa).

2 stretches are compositionally biased toward polar residues: residues 1–13 (MINS…QTLN) and 131–146 (QVNS…QNDF). Disordered stretches follow at residues 1–21 (MINS…SQMD), 131–166 (QVNS…STDY), and 189–208 (LNQQ…DNSQ). Basic residues predominate over residues 151-161 (RKPKNPTTKKR). The span at 189 to 199 (LNQQNQQQQDL) shows a compositional bias: low complexity. Residues 571 to 930 (DINNVIDDEK…YGMAQKSGIK (360 aa)) enclose the TTL domain. Residues 741 to 744 (QKYI), Lys754, and Asp756 each bind ATP. Positions 1002-1034 (HDQKQFSSQQANNIETYSRPQTAKSQTQSSKKL) are disordered.

Its subcellular location is the cytoplasm. In terms of biological role, probable glycylase which modifies tubulin, generating side chains of glycine on the gamma-carboxyl groups of specific glutamate residues within the C-terminal tail of tubulin. This chain is Tubulin glycylase 3D (TTLL3D), found in Tetrahymena thermophila (strain SB210).